The chain runs to 284 residues: Bifunctional protein FolD (284 aa).

Residues 164–166 (GRS) and Ser-189 each bind NADP(+).

It belongs to the tetrahydrofolate dehydrogenase/cyclohydrolase family. As to quaternary structure, homodimer.

It carries out the reaction (6R)-5,10-methylene-5,6,7,8-tetrahydrofolate + NADP(+) = (6R)-5,10-methenyltetrahydrofolate + NADPH. The catalysed reaction is (6R)-5,10-methenyltetrahydrofolate + H2O = (6R)-10-formyltetrahydrofolate + H(+). It functions in the pathway one-carbon metabolism; tetrahydrofolate interconversion. Catalyzes the oxidation of 5,10-methylenetetrahydrofolate to 5,10-methenyltetrahydrofolate and then the hydrolysis of 5,10-methenyltetrahydrofolate to 10-formyltetrahydrofolate. In Listeria monocytogenes serotype 4b (strain F2365), this protein is Bifunctional protein FolD.